A 370-amino-acid chain; its full sequence is MTDNPNKKTFWDKVHLDPTMLLILLALLVYSALVIWSASGQDIGMMERKIGQIAMGLVIMVVMAQIPPRVYEGWAPYLYIICIILLVAVDAFGAISKGAQRWLDLGIVRFQPSEIAKIAVPLMVARFINRDVCPPSLKNTGIALVLIFMPTLLVAAQPDLGTSILVALSGLFVLFLSGLSWRLIGVAVVLVAAFIPILWFFLMHDYQRQRVMMLLDPESDPLGAGYHIIQSKIAIGSGGLRGKGWLHGTQSQLEFLPERHTDFIFAVLAEELGLVGILILLALYILLIMRGLWIAARAQTTFGRVMAGGLMLILFVYVFVNIGMVSGILPVVGVPLPLVSYGGSALIVLMAGFGIVMSIHTHRKMLSKSV.

9 helical membrane passes run 20–40, 50–70, 75–95, 136–156, 160–180, 183–203, 263–283, 312–332, and 336–356; these read MLLI…SASG, IGQI…PPRV, APYL…FGAI, SLKN…LVAA, LGTS…SGLS, LIGV…FFLM, FIFA…LLAL, LILF…LPVV, and LPLV…FGIV.

Belongs to the SEDS family. MrdB/RodA subfamily.

It is found in the cell inner membrane. The enzyme catalyses [GlcNAc-(1-&gt;4)-Mur2Ac(oyl-L-Ala-gamma-D-Glu-L-Lys-D-Ala-D-Ala)](n)-di-trans,octa-cis-undecaprenyl diphosphate + beta-D-GlcNAc-(1-&gt;4)-Mur2Ac(oyl-L-Ala-gamma-D-Glu-L-Lys-D-Ala-D-Ala)-di-trans,octa-cis-undecaprenyl diphosphate = [GlcNAc-(1-&gt;4)-Mur2Ac(oyl-L-Ala-gamma-D-Glu-L-Lys-D-Ala-D-Ala)](n+1)-di-trans,octa-cis-undecaprenyl diphosphate + di-trans,octa-cis-undecaprenyl diphosphate + H(+). Its pathway is cell wall biogenesis; peptidoglycan biosynthesis. Its function is as follows. Peptidoglycan polymerase that is essential for cell wall elongation. In Escherichia coli O157:H7, this protein is Peptidoglycan glycosyltransferase MrdB.